The sequence spans 807 residues: Carbamoyltransferase HypF2 (807 aa).

The Acylphosphatase-like domain occupies 14 to 101 (RIRIRVRGVV…VDADGFAILE (88 aa)). C4-type zinc fingers lie at residues 120-145 (CPDC…CTQC) and 170-195 (CRPC…CPDC). The YrdC-like domain maps to 212–415 (VDPIAETVAR…HVQFIRRARG (204 aa)). The disordered stretch occupies residues 663 to 682 (WGEQPSPGRPKTVAHSLGGV).

Belongs to the carbamoyltransferase HypF family.

It carries out the reaction C-terminal L-cysteinyl-[HypE protein] + carbamoyl phosphate + ATP + H2O = C-terminal S-carboxamide-L-cysteinyl-[HypE protein] + AMP + phosphate + diphosphate + H(+). It participates in protein modification; [NiFe] hydrogenase maturation. Functionally, involved in the maturation of [NiFe] hydrogenases. Along with HypE, it catalyzes the synthesis of the CN ligands of the active site iron of [NiFe]-hydrogenases. HypF functions as a carbamoyl transferase using carbamoylphosphate as a substrate and transferring the carboxamido moiety in an ATP-dependent reaction to the thiolate of the C-terminal cysteine of HypE yielding a protein-S-carboxamide. The polypeptide is Carbamoyltransferase HypF2 (hypF2) (Cupriavidus necator (strain ATCC 17699 / DSM 428 / KCTC 22496 / NCIMB 10442 / H16 / Stanier 337) (Ralstonia eutropha)).